Here is a 420-residue protein sequence, read N- to C-terminus: Serine--tRNA ligase (420 aa).

227 to 229 (TSE) lines the L-serine pocket. Residues 258–260 (RRE) and Val-274 contribute to the ATP site. Glu-281 is a binding site for L-serine. 345–348 (EVTS) provides a ligand contact to ATP. Thr-379 is an L-serine binding site.

Belongs to the class-II aminoacyl-tRNA synthetase family. Type-1 seryl-tRNA synthetase subfamily. As to quaternary structure, homodimer. The tRNA molecule binds across the dimer.

The protein localises to the cytoplasm. The enzyme catalyses tRNA(Ser) + L-serine + ATP = L-seryl-tRNA(Ser) + AMP + diphosphate + H(+). The catalysed reaction is tRNA(Sec) + L-serine + ATP = L-seryl-tRNA(Sec) + AMP + diphosphate + H(+). It participates in aminoacyl-tRNA biosynthesis; selenocysteinyl-tRNA(Sec) biosynthesis; L-seryl-tRNA(Sec) from L-serine and tRNA(Sec): step 1/1. Its function is as follows. Catalyzes the attachment of serine to tRNA(Ser). Is also able to aminoacylate tRNA(Sec) with serine, to form the misacylated tRNA L-seryl-tRNA(Sec), which will be further converted into selenocysteinyl-tRNA(Sec). In Acidothermus cellulolyticus (strain ATCC 43068 / DSM 8971 / 11B), this protein is Serine--tRNA ligase.